The chain runs to 273 residues: Tryptophan synthase alpha chain (273 aa).

Residues glutamate 49 and aspartate 60 each act as proton acceptor in the active site.

Belongs to the TrpA family. In terms of assembly, tetramer of two alpha and two beta chains.

It carries out the reaction (1S,2R)-1-C-(indol-3-yl)glycerol 3-phosphate + L-serine = D-glyceraldehyde 3-phosphate + L-tryptophan + H2O. It functions in the pathway amino-acid biosynthesis; L-tryptophan biosynthesis; L-tryptophan from chorismate: step 5/5. In terms of biological role, the alpha subunit is responsible for the aldol cleavage of indoleglycerol phosphate to indole and glyceraldehyde 3-phosphate. This Albidiferax ferrireducens (strain ATCC BAA-621 / DSM 15236 / T118) (Rhodoferax ferrireducens) protein is Tryptophan synthase alpha chain.